Here is a 286-residue protein sequence, read N- to C-terminus: General stress protein 39 (286 aa).

The tract at residues 1-26 is disordered; the sequence is MANYPKELPAQTQSRQPGIESEMNPS. 46–70 provides a ligand contact to NAD(+); it reads LITGGDSGIGRAVSVAYAKEGADIA. S178 contributes to the substrate binding site. Y191 functions as the Proton acceptor in the catalytic mechanism.

It belongs to the short-chain dehydrogenases/reductases (SDR) family.

The chain is General stress protein 39 (ydaD) from Bacillus subtilis (strain 168).